Reading from the N-terminus, the 316-residue chain is Porphobilinogen deaminase (316 aa).

S-(dipyrrolylmethanemethyl)cysteine is present on C242.

The protein belongs to the HMBS family. Monomer. The cofactor is dipyrromethane.

The catalysed reaction is 4 porphobilinogen + H2O = hydroxymethylbilane + 4 NH4(+). It functions in the pathway porphyrin-containing compound metabolism; protoporphyrin-IX biosynthesis; coproporphyrinogen-III from 5-aminolevulinate: step 2/4. In terms of biological role, tetrapolymerization of the monopyrrole PBG into the hydroxymethylbilane pre-uroporphyrinogen in several discrete steps. This is Porphobilinogen deaminase from Thioalkalivibrio sulfidiphilus (strain HL-EbGR7).